We begin with the raw amino-acid sequence, 561 residues long: Amidophosphoribosyltransferase 2, chloroplastic (561 aa).

Over residues 1-27 (MAATSSISSSLSLNAKPNKLSNNNNNN) the composition is skewed to low complexity. The disordered stretch occupies residues 1-36 (MAATSSISSSLSLNAKPNKLSNNNNNNKPHRFLRNP). A chloroplast-targeting transit peptide spans 1 to 53 (MAATSSISSSLSLNAKPNKLSNNNNNNKPHRFLRNPFLNPSSSSFSPLPASIS). The active-site Nucleophile is cysteine 87. Residues 87–307 (CGVVGIYGDS…PGEVLVVDKD (221 aa)) enclose the Glutamine amidotransferase type-2 domain. Residues cysteine 323, cysteine 469, cysteine 520, and cysteine 523 each coordinate [4Fe-4S] cluster.

The protein in the C-terminal section; belongs to the purine/pyrimidine phosphoribosyltransferase family. [4Fe-4S] cluster serves as cofactor. Requires Mg(2+) as cofactor. As to expression, mostly expressed in leaves, and, to a lower extent, in cotyledons.

It localises to the plastid. The protein localises to the chloroplast stroma. It catalyses the reaction 5-phospho-beta-D-ribosylamine + L-glutamate + diphosphate = 5-phospho-alpha-D-ribose 1-diphosphate + L-glutamine + H2O. It functions in the pathway purine metabolism; IMP biosynthesis via de novo pathway; N(1)-(5-phospho-D-ribosyl)glycinamide from 5-phospho-alpha-D-ribose 1-diphosphate: step 1/2. Inhibited by the phenyltriazole acetic acid compound [5-(4-chlorophenyl)-1-isopropyl-1H-[1,2,4]triazol-3-yl]-acetic acid (DAS734), a bleaching herbicide. Functionally, catalyzes the first committed step of 'de novo purine biosynthesis from glutamine. Required for chloroplast biogenesis and cell division. Confers sensitivity to the phenyltriazole acetic acid compound [5-(4-chlorophenyl)-1-isopropyl-1H-[1,2,4]triazol-3-yl]-acetic acid (DAS734), a bleaching herbicide. The polypeptide is Amidophosphoribosyltransferase 2, chloroplastic (ASE2) (Arabidopsis thaliana (Mouse-ear cress)).